A 186-amino-acid chain; its full sequence is Ribosome-recycling factor (186 aa).

Belongs to the RRF family.

It is found in the cytoplasm. Functionally, responsible for the release of ribosomes from messenger RNA at the termination of protein biosynthesis. May increase the efficiency of translation by recycling ribosomes from one round of translation to another. This is Ribosome-recycling factor from Rhizobium leguminosarum bv. trifolii (strain WSM2304).